The chain runs to 112 residues: Protein BEX3 (112 aa).

The segment at 1–45 (MANIHQENEEMEQPVQNGEEDRPLGGGEGHQPERNHRRGQARRLA) is disordered. The segment at 69–94 (EIFMEEMREIRRKLRELQLRNCLRIL) is interaction with p75NTR/NGFR. Residues 69–112 (EIFMEEMREIRRKLRELQLRNCLRILMGELSNHHDHHDEFCLMP) form an interaction with 14-3-3 epsilon region. Positions 78 to 88 (IRRKLRELQLR) match the Nuclear export signal motif. A his cluster region spans residues 101–105 (HHDHH). Zn(2+) is bound at residue C109.

This sequence belongs to the BEX family. In terms of assembly, self-associates. Binds to the DEATH domain of p75NTR/NGFR. Interacts with 14-3-3 epsilon (YWHAE). Interacts with DIABLO/SMAC. In terms of processing, ubiquitinated. Degraded by the proteasome.

The protein resides in the nucleus. Its subcellular location is the cytoplasm. It localises to the cytosol. In terms of biological role, may be a signaling adapter molecule involved in NGFR/p75NTR-mediated apoptosis induced by NGF. Plays a role in zinc-triggered neuronal death. In absence of reductive stress, acts as a pseudosubstrate for the CRL2(FEM1B) complex: associates with FEM1B via zinc, thereby preventing association between FEM1B and its substrates. This chain is Protein BEX3, found in Bos taurus (Bovine).